The sequence spans 481 residues: Sestrin-1 (481 aa).

The interval 63 to 244 (FADAFTDLGR…ICDITNGNHG (182 aa)) is N-terminal domain; may mediate the alkylhydroperoxide reductase activity. The active-site Cysteine sulfenic acid (-SOH) intermediate is cysteine 122. A disordered region spans residues 295-316 (KTESMVFSTEDEDPPPDIDVSR). The C-terminal domain; mediates TORC1 regulation stretch occupies residues 310–481 (PDIDVSRHFE…ALRAITRYMT (172 aa)). Residues 375–378 (TYNT), threonine 387, and glutamate 452 each bind L-leucine.

Belongs to the sestrin family.

The protein resides in the nucleus. The protein localises to the cytoplasm. It carries out the reaction a hydroperoxide + L-cysteinyl-[protein] = S-hydroxy-L-cysteinyl-[protein] + an alcohol. In terms of biological role, may function as an intracellular leucine sensor that negatively regulates the TORC1 signaling pathway through the GATOR complex. In absence of leucine, binds the GATOR subcomplex GATOR2 and prevents TORC1 signaling. Binding of leucine to SESN2 disrupts its interaction with GATOR2 thereby activating the TORC1 signaling pathway. This stress-inducible metabolic regulator may also play a role in protection against oxidative and genotoxic stresses. May prevent the accumulation of reactive oxygen species (ROS) through the alkylhydroperoxide reductase activity born by the N-terminal domain of the protein. The sequence is that of Sestrin-1 from Xenopus laevis (African clawed frog).